The sequence spans 101 residues: MAKKSSVEKNNRRKRMAKNAAPKRARLKAIIADKTKPMEERFAATLKLAEMPRNSSATRIRNRCELTGRPRSNYRKNKLSRIALRELGSKGLVPGLVKSSW.

The segment covering 1 to 10 has biased composition (basic and acidic residues); it reads MAKKSSVEKN. The segment at 1 to 23 is disordered; it reads MAKKSSVEKNNRRKRMAKNAAPK. Basic residues predominate over residues 11-23; that stretch reads NRRKRMAKNAAPK.

The protein belongs to the universal ribosomal protein uS14 family. In terms of assembly, part of the 30S ribosomal subunit. Contacts proteins S3 and S10.

In terms of biological role, binds 16S rRNA, required for the assembly of 30S particles and may also be responsible for determining the conformation of the 16S rRNA at the A site. The polypeptide is Small ribosomal subunit protein uS14 (Bradyrhizobium sp. (strain BTAi1 / ATCC BAA-1182)).